The sequence spans 248 residues: tRNA pseudouridine synthase A (248 aa).

The Nucleophile role is filled by D53. Y111 is a substrate binding site.

Belongs to the tRNA pseudouridine synthase TruA family. In terms of assembly, homodimer.

It carries out the reaction uridine(38/39/40) in tRNA = pseudouridine(38/39/40) in tRNA. Functionally, formation of pseudouridine at positions 38, 39 and 40 in the anticodon stem and loop of transfer RNAs. The chain is tRNA pseudouridine synthase A from Listeria monocytogenes serovar 1/2a (strain ATCC BAA-679 / EGD-e).